The sequence spans 143 residues: Potassium voltage-gated channel subfamily E regulatory beta subunit 5 (143 aa).

N-linked (GlcNAc...) asparagine glycans are attached at residues N2 and N25. Residues 61-81 form a helical membrane-spanning segment; the sequence is LYILLIMIFYACLAGGLILAY. At 82–143 the chain is on the cytoplasmic side; the sequence is TRSRKLVEAK…PALAQGAERV (62 aa).

Belongs to the potassium channel KCNE family. As to quaternary structure, interacts with KCNQ1; impairs KCNQ1 localization in lipid rafts and only conducts current upon strong and continued depolarization. In terms of tissue distribution, detected in embryonal dorsal root and nerve ganglia, in the somites and in myoepicardial layer of the developing heart wall. Detected at lower levels in the central nervous system (CNS) and in developing limb.

The protein resides in the membrane. Its function is as follows. Potassium channel ancillary subunit that is essential for generation of some native K(+) currents by virtue of formation of heteromeric ion channel complex with voltage-gated potassium (Kv) channel pore-forming alpha subunits. Functions as an inhibitory beta-subunit of the repolarizing cardiac potassium ion channel KCNQ1. This chain is Potassium voltage-gated channel subfamily E regulatory beta subunit 5 (Kcne5), found in Mus musculus (Mouse).